A 567-amino-acid chain; its full sequence is Glucose-6-phosphate isomerase, cytosolic (567 aa).

Glu-360 serves as the catalytic Proton donor. Residues His-391 and Lys-516 contribute to the active site.

It belongs to the GPI family. In terms of assembly, homodimer.

The protein resides in the cytoplasm. It catalyses the reaction alpha-D-glucose 6-phosphate = beta-D-fructose 6-phosphate. It participates in carbohydrate degradation; glycolysis; D-glyceraldehyde 3-phosphate and glycerone phosphate from D-glucose: step 2/4. This is Glucose-6-phosphate isomerase, cytosolic (PHI1) from Zea mays (Maize).